We begin with the raw amino-acid sequence, 121 residues long: Basic phospholipase A2 homolog 2 (121 aa).

7 disulfides stabilise this stretch: Cys-26-Cys-115, Cys-28-Cys-44, Cys-43-Cys-95, Cys-49-Cys-121, Cys-50-Cys-88, Cys-57-Cys-81, and Cys-75-Cys-86. The interval 105–117 is important for membrane-damaging activities in eukaryotes and bacteria; heparin-binding; the sequence is KKYRYHLKPLCKK.

This sequence belongs to the phospholipase A2 family. Group II subfamily. K49 sub-subfamily. In terms of assembly, homodimer; non-covalently linked (probable alternative/compact dimer conformation in solution). As to expression, expressed by the venom gland.

It localises to the secreted. Functionally, snake venom phospholipase A2 homolog that lacks enzymatic activity. Is myotoxic and displays edema-inducing activities in mouse paw. Also displays cytotoxic activity against myotubes. A model of myotoxic mechanism has been proposed: an apo Lys49-PLA2 is activated by the entrance of a hydrophobic molecule (e.g. fatty acid) at the hydrophobic channel of the protein leading to a reorientation of a monomer. This reorientation causes a transition between 'inactive' to 'active' states, causing alignment of C-terminal and membrane-docking sites (MDoS) side-by-side and putting the membrane-disruption sites (MDiS) in the same plane, exposed to solvent and in a symmetric position for both monomers. The MDoS region stabilizes the toxin on membrane by the interaction of charged residues with phospholipid head groups. Subsequently, the MDiS region destabilizes the membrane with penetration of hydrophobic residues. This insertion causes a disorganization of the membrane, allowing an uncontrolled influx of ions (i.e. calcium and sodium), and eventually triggering irreversible intracellular alterations and cell death. In Bothrops brazili (Brazil's lancehead), this protein is Basic phospholipase A2 homolog 2.